The sequence spans 340 residues: MNIKDRTSEFQQSVLSYKKRNKNFREQQRERLQEKESENFANNTTGNGKSVSEFQKKASGIAHEISSTAQLLSKLAVLAKRKPMFNDNPVEIAELSFLIKRKIYAIEQSLVQLSQLKKTDVNGNTSNQSSKQPSAVQHSKNVVNLLNTQMKNISGSFKDVLEERQRLEMANKDRWQKLTTDTGHAPADDQTQSNHAADLTTYNNSNPFMTSLLDESSEKNNNSSNQGELSFPQNDSQLMLMEEGQLSNNVYLQERNRAVETIESTIQEVGNLFQQLASMVQEQGEVIQRIDANVDDIDLNISGAQRELLKYFDRIKSNRWLAAKVFFIIFVFFVIWVLVN.

The Cytoplasmic segment spans residues 1–319; sequence MNIKDRTSEF…KYFDRIKSNR (319 aa). The tract at residues 31 to 51 is disordered; it reads RLQEKESENFANNTTGNGKSV. Over residues 39–51 the composition is skewed to polar residues; it reads NFANNTTGNGKSV. Residues 146-173 adopt a coiled-coil conformation; that stretch reads LNTQMKNISGSFKDVLEERQRLEMANKD. Residues 180-231 are disordered; sequence TDTGHAPADDQTQSNHAADLTTYNNSNPFMTSLLDESSEKNNNSSNQGELSF. Residues 189–209 show a composition bias toward polar residues; it reads DQTQSNHAADLTTYNNSNPFM. Positions 249–311 constitute a t-SNARE coiled-coil homology domain; it reads NVYLQERNRA…SGAQRELLKY (63 aa). Residues 320–340 form a helical; Anchor for type IV membrane protein membrane-spanning segment; it reads WLAAKVFFIIFVFFVIWVLVN.

The protein belongs to the syntaxin family. In terms of assembly, interacts with SLY1, STF1, SFB3 and GOS1.

It localises to the membrane. The protein resides in the golgi apparatus membrane. Required for vesicular transport between the endoplasmic reticulum and the Golgi complex. Acts as a target organelle soluble NSF attachment protein receptor (t-SNARE). The protein is Integral membrane protein SED5 (SED5) of Saccharomyces cerevisiae (strain ATCC 204508 / S288c) (Baker's yeast).